The following is a 596-amino-acid chain: MRTCYTGQVCRDHLGQTVTLYGWVNRRRDHGGVIFIDLRDRTGLAQIVFDPDNAGAFGTAERLRNEFCVRVTGLVRERPQGTTNAELASGEVEVLCRDVEILNPSVTPPFQLDDDNLSETTRLTHRVLDLRRPQMQRNLMLRYRVSIEVRKFLDQLGFIDIETPMLTKSTPEGARDYLVPSRVNAGHFFALPQSPQLFKQMLMVSGFDRYYQITKCFRDEDLRADRQPEFTQIDCETSFLTETEIRAVFESMIRHVFKVVQNVDLPDPFPIMTWTEAMARFGSDKPDMRVNLEFTDVADIMRDVDFKVFASAATTQGSRVVALRVPGGGELSRSEIDAYTQFVGIYGAKGLAYIKVNDVAKGREGLQSPIVKNLHDAALAELVKRTGAQDGDIIFFGADRAKVVNDALGALRVKIGHSEFGKKTGLFSGGWRPLWVVDFPMFEYDEEEGRYTAAHHPFTSPKDGHEDFLETDPSQAFAKAYDMVLNGWEIGGGSVRIHREEVQSKVFRALKIGPDEAREKFGFLLDALQYGAPPHGGIAFGLDRIVTMMTGADSIRDVIAFPKTQRAQDLLTQAPSSVDDKQLRELHIRLRNTEVK.

Glu172 lines the L-aspartate pocket. Residues 196 to 199 (QLFK) form an aspartate region. Arg218 lines the L-aspartate pocket. Residues 218-220 (RDE) and Gln227 each bind ATP. Residue His455 participates in L-aspartate binding. An ATP-binding site is contributed by Glu489. Position 496 (Arg496) interacts with L-aspartate. ATP is bound at residue 541–544 (GLDR).

This sequence belongs to the class-II aminoacyl-tRNA synthetase family. Type 1 subfamily. In terms of assembly, homodimer.

Its subcellular location is the cytoplasm. The catalysed reaction is tRNA(Asx) + L-aspartate + ATP = L-aspartyl-tRNA(Asx) + AMP + diphosphate. Its function is as follows. Aspartyl-tRNA synthetase with relaxed tRNA specificity since it is able to aspartylate not only its cognate tRNA(Asp) but also tRNA(Asn). Reaction proceeds in two steps: L-aspartate is first activated by ATP to form Asp-AMP and then transferred to the acceptor end of tRNA(Asp/Asn). The sequence is that of Aspartate--tRNA(Asp/Asn) ligase from Bordetella avium (strain 197N).